We begin with the raw amino-acid sequence, 277 residues long: Protein OPG166 (277 aa).

N-linked (GlcNAc...) asparagine; by host glycosylation is found at Asn-29 and Asn-58. Transmembrane regions (helical) follow at residues 124–144, 156–176, 186–206, 219–239, and 247–267; these read TMLM…EITY, GILQ…AFLF, IIGL…KVFS, LIIY…GLSL, and LLLS…LFLV.

It belongs to the orthopoxvirus OPG166 protein family.

It is found in the host membrane. Promotes, when overexpressed, the influx of extracellular Ca(2+), leading to membrane permeability and host cell necrosis. This chain is Protein OPG166 (OPG166), found in Vaccinia virus (strain Copenhagen) (VACV).